The primary structure comprises 167 residues: MSKEIIAKKAAIVEEVFEKFQSASSVVVVDYRGLTVEEVTDLRKQLREAGVEMRVIKNTFLKRAADKAGYEGLDDTFSGPTAVAFGGEDITAPARIMAKFAEDHEALEIKGGMIEGKIASLEEINALAKLPNRDGLLSMLLSVLQAPVRNFAYAVKAVADSKDEDAA.

Belongs to the universal ribosomal protein uL10 family. As to quaternary structure, part of the ribosomal stalk of the 50S ribosomal subunit. The N-terminus interacts with L11 and the large rRNA to form the base of the stalk. The C-terminus forms an elongated spine to which L12 dimers bind in a sequential fashion forming a multimeric L10(L12)X complex.

Functionally, forms part of the ribosomal stalk, playing a central role in the interaction of the ribosome with GTP-bound translation factors. The protein is Large ribosomal subunit protein uL10 of Ligilactobacillus salivarius (strain UCC118) (Lactobacillus salivarius).